The sequence spans 789 residues: MRFTLSWLMQYLDTDASLDFIISKLSDIGLEVDSVDCKKHLQSFVVVEVIDVVPHHAADKLKVCQVYDGVQTFQVVCGASNVKVGMKSVLAYVGSVIPKNQTVIKVAKLRGVDSYGMLCSRDELGITENDSTDEGIIELSDNTYNVGESFFSCDPVIELNITPNRGDCLGVYGIARDLAAAGVGKLKSVNFCDITFDNTCYISPIEICLEVQGVVKGVYIKGIRNCETPKWLKEYLFSCGVKSISCVVDIINYIMLSFNRPLHIYDADKIAGKLVFRKIDDQIEFFALNDKKYLLGKENIIAVDLANRIHSIVGVIGSEYSKCLFDTENIFLECAWFDPVDIALSSRKIKLSTDSSYRLERFVDPEFLQDGLKLATKMILEYCGGSPSSIVSVQNYVHNDILLNFSPDSVRNIGSVSITRDEIFDFLCNIGCVVKNHDCDIWIVIPPSWRSDLKHSFDLVEEVLRLYGYDKILENPIPISNIEFPDNLHNKLRSVLLSQGMMEVVTWSFTNLEFAKKFGYDSDIMLIDNPINNNMNLMRPSVLLNLLQVISENQAYGNNDAAIFEIGQIYNINSVCGDNNYVVSGVRYGDNLPRNFYKTDRSVDIFDVKSDFFKVLQEMNIGYDSVDLVRSTKSYLHPMKSADVYFNNILIGYFGELHPSIVHLYEIKRPIVCFEVFLYKIPVVDLTRKEFVELRYQSVKRDFAFLVSKNVNIQCLIEVAKKTNVQLIEDVSIFDIYEGNGIDKGMLSVALSVTFRSVDHTLNDQEIKDASDLIISAISKGFNGILRSC.

The region spanning 38–151 (KKHLQSFVVV…NTYNVGESFF (114 aa)) is the tRNA-binding domain. Residues 398–474 (HNDILLNFSP…RLYGYDKILE (77 aa)) enclose the B5 domain. Residues D452, D458, E461, and E462 each coordinate Mg(2+). The FDX-ACB domain maps to 694-787 (LRYQSVKRDF…ISKGFNGILR (94 aa)).

This sequence belongs to the phenylalanyl-tRNA synthetase beta subunit family. Type 1 subfamily. In terms of assembly, tetramer of two alpha and two beta subunits. The cofactor is Mg(2+).

The protein resides in the cytoplasm. It catalyses the reaction tRNA(Phe) + L-phenylalanine + ATP = L-phenylalanyl-tRNA(Phe) + AMP + diphosphate + H(+). This Ehrlichia ruminantium (strain Gardel) protein is Phenylalanine--tRNA ligase beta subunit.